We begin with the raw amino-acid sequence, 218 residues long: Akirin (218 aa).

The disordered stretch occupies residues 96–150; it reads KAIPRSNDFDDDGDQRGDGCSSNYSKAYRAPSSPKSGSDSEGEAPSTSVTDRSSA. Residues 128–147 show a composition bias toward polar residues; that stretch reads SPKSGSDSEGEAPSTSVTDR.

The protein belongs to the akirin family. As to quaternary structure, interacts with hda-1, a component of the NuRD complex. Interacts with let-418, a component of the NuRD and MEC complexes. Interacts with the transcription factor ceh-18. Interacts with ima-2. In terms of tissue distribution, localizes to somatic tissues throughout the body, including muscle cells. Expressed in lateral epithelial seam cells, the hyp7 epidermal syncytium, and multiple head and tail neurons.

It is found in the nucleus. In terms of biological role, molecular adapter that acts as a bridge between a variety of multiprotein complexes, and which is involved in antifungal innate immunity, development of the muscle and sister chromatid cohesion. Plays a role in antifungal innate immunity by acting as a bridge between components of the NuRD (Nucleosome Remodeling and Deacetylase) and MEC chromatin remodeling complexes. NuRD and MEC complexes bind to the promoters of antimicrobial peptide genes and may recruit other proteins such as ceh-18 to control gene expression in response to fungal infection. During meiotic prophase I, plays a role in the disassembly of synaptonemal complex proteins and in the regulation of chromosome condensation and segregation. Together with nuclear import receptor ima-2, required for the import and load of cohesin complex proteins in meiotic nuclei, possibly by acting as a bridge between ima-2 and cohesins. Required for embryonic development of muscle tissue. The sequence is that of Akirin from Caenorhabditis elegans.